The primary structure comprises 753 residues: Glycerophosphodiester phosphodiesterase GDPDL6 (753 aa).

The first 17 residues, 1–17 (MLRFFILFSLFLHSSVA), serve as a signal peptide directing secretion. GP-PDE domains are found at residues 41-339 (PAVV…SQSI) and 355-654 (ALVI…TRYL). N-linked (GlcNAc...) asparagine glycosylation is found at asparagine 304, asparagine 516, asparagine 603, and asparagine 715. The disordered stretch occupies residues 707-729 (PPVAKLASNGTEGGPPQTPPRSG). Residues 731–751 (VAIAANLSLSLLAMMALGLLY) traverse the membrane as a helical segment.

Belongs to the glycerophosphoryl diester phosphodiesterase family. As to expression, expressed in flowers and siliques.

Its subcellular location is the membrane. It catalyses the reaction a sn-glycero-3-phosphodiester + H2O = an alcohol + sn-glycerol 3-phosphate + H(+). This chain is Glycerophosphodiester phosphodiesterase GDPDL6, found in Arabidopsis thaliana (Mouse-ear cress).